Reading from the N-terminus, the 580-residue chain is uncharacterized protein (580 aa).

Over residues 1–44 the composition is skewed to polar residues; sequence MSESSVNADTPKNTNDVLNGAYQSATTEPEGQYRSATDNPSLYQ. Positions 1 to 45 are disordered; the sequence is MSESSVNADTPKNTNDVLNGAYQSATTEPEGQYRSATDNPSLYQV. Position 99 is a phosphoserine (Ser99). Helical transmembrane passes span 143 to 163, 177 to 197, 207 to 227, 235 to 255, 265 to 285, 295 to 315, 370 to 390, 405 to 425, 450 to 470, 476 to 496, 511 to 533, and 546 to 566; these read IYAY…PASA, LLNV…WAPM, LYIG…AQDI, FFGG…FADM, ITIF…VGGF, WTEY…YLFC, PIVF…YLLL, LGVS…GCGI, LPPM…LAWS, VHWI…LLIF, AASV…PLFA, and GSLL…FFFF.

This sequence belongs to the major facilitator superfamily. CAR1 family.

Its subcellular location is the membrane. This is an uncharacterized protein from Schizosaccharomyces pombe (strain 972 / ATCC 24843) (Fission yeast).